A 213-amino-acid chain; its full sequence is UPF0056 membrane protein AF_2111 (213 aa).

The next 6 membrane-spanning stretches (helical) occupy residues 1-21 (MDIA…FIII), 51-71 (IIAF…LDYF), 75-95 (ISSL…DILL), 118-138 (VFPL…GIVL), 142-162 (AGDV…YSIV), and 181-201 (ADIA…EFVF).

The protein belongs to the UPF0056 (MarC) family.

Its subcellular location is the cell membrane. The sequence is that of UPF0056 membrane protein AF_2111 from Archaeoglobus fulgidus (strain ATCC 49558 / DSM 4304 / JCM 9628 / NBRC 100126 / VC-16).